Reading from the N-terminus, the 82-residue chain is U16-lycotoxin-Ls1a (82 aa).

Positions 1-22 (MSPKVQALLLLVGLITFLAVHA) are cleaved as a signal peptide. A propeptide spanning residues 23–34 (EEELSETVESER) is cleaved from the precursor. Disulfide bonds link Cys-36/Cys-51, Cys-43/Cys-56, Cys-50/Cys-67, and Cys-58/Cys-65.

This sequence belongs to the neurotoxin 02 (plectoxin) family. 04 (U16-lycotoxin) subfamily. Expressed by the venom gland.

The protein localises to the secreted. The chain is U16-lycotoxin-Ls1a from Lycosa singoriensis (Wolf spider).